The sequence spans 380 residues: Queuine tRNA-ribosyltransferase (380 aa).

Residue Asp96 is the Proton acceptor of the active site. Substrate is bound by residues 96–100 (DSGGF), Asp150, Gln193, and Gly220. Positions 251–257 (GVGAPDS) are RNA binding. The active-site Nucleophile is Asp270. The RNA binding; important for wobble base 34 recognition stretch occupies residues 275–279 (TRIAR). 4 residues coordinate Zn(2+): Cys308, Cys310, Cys313, and His339.

The protein belongs to the queuine tRNA-ribosyltransferase family. Homodimer. Within each dimer, one monomer is responsible for RNA recognition and catalysis, while the other monomer binds to the replacement base PreQ1. It depends on Zn(2+) as a cofactor.

It carries out the reaction 7-aminomethyl-7-carbaguanine + guanosine(34) in tRNA = 7-aminomethyl-7-carbaguanosine(34) in tRNA + guanine. It participates in tRNA modification; tRNA-queuosine biosynthesis. Functionally, catalyzes the base-exchange of a guanine (G) residue with the queuine precursor 7-aminomethyl-7-deazaguanine (PreQ1) at position 34 (anticodon wobble position) in tRNAs with GU(N) anticodons (tRNA-Asp, -Asn, -His and -Tyr). Catalysis occurs through a double-displacement mechanism. The nucleophile active site attacks the C1' of nucleotide 34 to detach the guanine base from the RNA, forming a covalent enzyme-RNA intermediate. The proton acceptor active site deprotonates the incoming PreQ1, allowing a nucleophilic attack on the C1' of the ribose to form the product. After dissociation, two additional enzymatic reactions on the tRNA convert PreQ1 to queuine (Q), resulting in the hypermodified nucleoside queuosine (7-(((4,5-cis-dihydroxy-2-cyclopenten-1-yl)amino)methyl)-7-deazaguanosine). This is Queuine tRNA-ribosyltransferase from Streptococcus uberis (strain ATCC BAA-854 / 0140J).